Here is a 122-residue protein sequence, read N- to C-terminus: RxLR effector protein Avh52 (122 aa).

The first 21 residues, 1–21 (MRLTSILVLVIAATFHTTGTA), serve as a signal peptide directing secretion. Residues 50–68 (RLLRRVEKDKVDYEQDEQR) carry the RxLR-dEER motif. The tract at residues 69–86 (SFGALKDAVKKLNPVTAV) is TAP1-binding. The interval 87–98 (KKFFKQRAKRKK) is nuclear localization signal (NLS).

Belongs to the RxLR effector family. In terms of assembly, interacts with host acetyl transferase TAP1.

It is found in the secreted. It localises to the host nucleus. In terms of biological role, effector that suppresses plant defense responses during the early stages of pathogen infection. Suppresses cell death induced by effectors and PAMPs in plant hosts. Interacts with host acetyltransferase TAP1 and causes TAP1 relocation into the nucleus where it acetylates histones H2A and H3 during early infection, thereby promoting susceptibility of host plant to P.sojae. The sequence is that of RxLR effector protein Avh52 from Phytophthora sojae (strain P6497) (Soybean stem and root rot agent).